The primary structure comprises 206 residues: Flavin reductase (NADPH) (206 aa).

Residues glycine 10, threonine 12, glycine 13, threonine 15, arginine 35, serine 38, and arginine 39 each contribute to the NADP(+) site. The residue at position 42 (serine 42) is a Phosphoserine. NADP(+) contacts are provided by aspartate 54, valine 55, leucine 75, and glycine 76. At serine 82 the chain carries Phosphoserine. The NADP(+) site is built by methionine 87, cysteine 109, histidine 132, histidine 153, and isoleucine 154. Residue cysteine 109 is the S-nitroso-cysteine intermediate; for S-nitroso-CoA-dependent nitrosyltransferase activity of the active site. Cysteine 188 acts as the S-nitroso-cysteine intermediate; for S-nitroso-CoA-dependent nitrosyltransferase activity in catalysis.

This sequence belongs to the BLVRB family. As to quaternary structure, monomer.

It localises to the cytoplasm. It carries out the reaction reduced riboflavin + NADP(+) = riboflavin + NADPH + 2 H(+). It catalyses the reaction bilirubin IXbeta + NADP(+) = biliverdin IXbeta + NADPH + H(+). The enzyme catalyses FMNH2 + NAD(+) = FMN + NADH + 2 H(+). The catalysed reaction is FMNH2 + NADP(+) = FMN + NADPH + 2 H(+). It carries out the reaction S-nitroso-CoA + L-cysteinyl-[protein] = S-nitroso-L-cysteinyl-[protein] + CoA. It catalyses the reaction L-cysteinyl-[SCAN] + S-nitroso-CoA = S-nitroso-L-cysteinyl-[SCAN] + CoA. The enzyme catalyses S-nitroso-L-cysteinyl-[SCAN] + L-cysteinyl-[protein] = L-cysteinyl-[SCAN] + S-nitroso-L-cysteinyl-[protein]. In terms of biological role, enzyme that can both act as a NAD(P)H-dependent reductase and a S-nitroso-CoA-dependent nitrosyltransferase. Promotes fetal heme degradation during development. Also expressed in adult tissues, where it acts as a regulator of hematopoiesis, intermediary metabolism (glutaminolysis, glycolysis, TCA cycle and pentose phosphate pathway) and insulin signaling. Has a broad specificity oxidoreductase activity by catalyzing the NAD(P)H-dependent reduction of a variety of flavins, such as riboflavin, FAD or FMN, biliverdins, methemoglobin and PQQ (pyrroloquinoline quinone). Contributes to fetal heme catabolism by catalyzing reduction of biliverdin IXbeta into bilirubin IXbeta in the liver. Biliverdin IXbeta, which constitutes the major heme catabolite in the fetus is not present in adult. Does not reduce bilirubin IXalpha. Can also reduce the complexed Fe(3+) iron to Fe(2+) in the presence of FMN and NADPH. Acts as a protein nitrosyltransferase by catalyzing nitrosylation of cysteine residues of target proteins, such as HMOX2, INSR and IRS1. S-nitroso-CoA-dependent nitrosyltransferase activity is mediated via a 'ping-pong' mechanism: BLVRB first associates with both S-nitroso-CoA and protein substrate, nitric oxide group is then transferred from S-nitroso-CoA to Cys-109 and Cys-188 residues of BLVRB and from S-nitroso-BLVRB to the protein substrate. Inhibits insulin signaling by mediating nitrosylation of INSR and IRS1, leading to their inhibition. The chain is Flavin reductase (NADPH) (Blvrb) from Mus musculus (Mouse).